A 261-amino-acid chain; its full sequence is tRNA pseudouridine synthase A (261 aa).

Asp51 acts as the Nucleophile in catalysis. Tyr109 lines the substrate pocket.

This sequence belongs to the tRNA pseudouridine synthase TruA family. As to quaternary structure, homodimer.

It catalyses the reaction uridine(38/39/40) in tRNA = pseudouridine(38/39/40) in tRNA. Functionally, formation of pseudouridine at positions 38, 39 and 40 in the anticodon stem and loop of transfer RNAs. The polypeptide is tRNA pseudouridine synthase A (Shewanella denitrificans (strain OS217 / ATCC BAA-1090 / DSM 15013)).